The sequence spans 500 residues: Aldehyde dehydrogenase, mitochondrial (500 aa).

Residues Lys-35, Lys-56, and Lys-142 each carry the N6-acetyllysine modification. 245-250 (GSTEVG) is a binding site for NAD(+). Catalysis depends on Glu-268, which acts as the Proton acceptor. Catalysis depends on Cys-302, which acts as the Nucleophile. Residues Lys-358, Lys-366, Lys-409, Lys-411, Lys-424, and Lys-434 each carry the N6-acetyllysine modification.

It belongs to the aldehyde dehydrogenase family. As to quaternary structure, homotetramer. Post-translationally, in response to mitochondrial stress, the precursor protein is ubiquitinated by the SIFI complex in the cytoplasm before mitochondrial import, leading to its degradation. Within the SIFI complex, UBR4 initiates ubiquitin chain that are further elongated or branched by KCMF1.

The protein resides in the mitochondrion matrix. It carries out the reaction an aldehyde + NAD(+) + H2O = a carboxylate + NADH + 2 H(+). It functions in the pathway alcohol metabolism; ethanol degradation; acetate from ethanol: step 2/2. Its function is as follows. Required for clearance of cellular formaldehyde, a cytotoxic and carcinogenic metabolite that induces DNA damage. In Equus caballus (Horse), this protein is Aldehyde dehydrogenase, mitochondrial (ALDH2).